Consider the following 702-residue polypeptide: Elongation factor G (702 aa).

The region spanning 8-290 (CQYRNIGISA…AIIEYLPAPN (283 aa)) is the tr-type G domain. Residues 17–24 (AHIDAGKT), 88–92 (DTPGH), and 142–145 (NKMD) each bind GTP.

Belongs to the TRAFAC class translation factor GTPase superfamily. Classic translation factor GTPase family. EF-G/EF-2 subfamily.

The protein localises to the cytoplasm. Catalyzes the GTP-dependent ribosomal translocation step during translation elongation. During this step, the ribosome changes from the pre-translocational (PRE) to the post-translocational (POST) state as the newly formed A-site-bound peptidyl-tRNA and P-site-bound deacylated tRNA move to the P and E sites, respectively. Catalyzes the coordinated movement of the two tRNA molecules, the mRNA and conformational changes in the ribosome. This is Elongation factor G from Buchnera aphidicola subsp. Schizaphis graminum (strain Sg).